The primary structure comprises 505 residues: Keratin, type II cuticular Hb1 (505 aa).

Residues 1–106 form a head region; sequence MTCGSGFGGR…PNAQCVKQEE (106 aa). Positions 106–417 constitute an IF rod domain; it reads EKEQIKSLNS…RLLEGEEQRL (312 aa). The coil 1A stretch occupies residues 107-141; that stretch reads KEQIKSLNSRFAAFIDKVRFLEQQNKLLETKLQFY. The segment at 142–151 is linker 1; it reads QNRECCQSNL. The segment at 152–252 is coil 1B; that stretch reads EPLFEGYIET…YEEEILILQS (101 aa). Residue K212 forms a Glycyl lysine isopeptide (Lys-Gly) (interchain with G-Cter in SUMO1) linkage. A linker 12 region spans residues 253-269; sequence HISDTSVVVKLDNSRDL. The tract at residues 270–413 is coil 2; the sequence is NMDCIIAEIK…ATYRRLLEGE (144 aa). The segment at 414-505 is tail; that stretch reads EQRLCEGIGA…GSCGSSCRKC (92 aa).

It belongs to the intermediate filament family. Heterotetramer of two type I and two type II keratins. In terms of tissue distribution, abundantly expressed in the differentiating cortex of growing (anagen) hair. Expression is restricted to the keratinocytes of the hair cortex and is absent from inner root sheath and medulla. Expressed in malignant lymph node tissue in breast carcinoma tissue.

The protein is Keratin, type II cuticular Hb1 (KRT81) of Homo sapiens (Human).